A 371-amino-acid polypeptide reads, in one-letter code: Probable cysteine protease RDL5 (371 aa).

An N-terminal signal peptide occupies residues 1–23; the sequence is MGYAKSAMLIFLLALVIASCATA. A propeptide spans 24–143 (activation peptide); that stretch reads MDMSVVSSND…NRYKTSDGDV (120 aa). Asn94 carries an N-linked (GlcNAc...) asparagine glycan. Intrachain disulfides connect Cys165–Cys206, Cys199–Cys239, and Cys298–Cys349. The active site involves Cys168. Residues His304 and Asn324 contribute to the active site.

Belongs to the peptidase C1 family. Expressed in roots, inflorescences and siliques.

Functionally, possesses protease activity in vitro. The protein is Probable cysteine protease RDL5 of Arabidopsis thaliana (Mouse-ear cress).